The chain runs to 684 residues: RNA helicase NPH-II (684 aa).

Residues 184-359 form the Helicase ATP-binding domain; it reads FRAWAARRPT…EFFPDAEFVH (176 aa). 197–204 is an ATP binding site; sequence GGTGVGKT. The DEXH box signature appears at 308 to 311; the sequence is DEVH. One can recognise a Helicase C-terminal domain in the interval 392–563; it reads NVSAALSAHR…DLYVQPSDLE (172 aa).

It belongs to the DEAD box helicase family. DEAH subfamily. In terms of assembly, monomer.

Its subcellular location is the virion. The catalysed reaction is ATP + H2O = ADP + phosphate + H(+). Its function is as follows. NTP-dependent helicase that catalyzes unidirectional unwinding of 3'tailed duplex RNAs and plays an important role during transcription of early mRNAs, presumably by preventing R-loop formation behind the elongating RNA polymerase. Might also play a role in the export of newly synthesized mRNA chains out of the core into the cytoplasm. Required for replication and propagation of viral particles. The protein is RNA helicase NPH-II (NPH2) of Homo sapiens (Human).